The primary structure comprises 200 residues: dITP/XTP pyrophosphatase (200 aa).

5-10 (TRNEGK) serves as a coordination point for substrate. The Proton acceptor role is filled by Asp-67. Asp-67 is a binding site for Mg(2+). Residues Ser-68, 151–154 (FGYD), Lys-174, and 179–180 (HR) each bind substrate.

It belongs to the HAM1 NTPase family. In terms of assembly, homodimer. Mg(2+) serves as cofactor.

It catalyses the reaction XTP + H2O = XMP + diphosphate + H(+). It carries out the reaction dITP + H2O = dIMP + diphosphate + H(+). The enzyme catalyses ITP + H2O = IMP + diphosphate + H(+). Functionally, pyrophosphatase that catalyzes the hydrolysis of nucleoside triphosphates to their monophosphate derivatives, with a high preference for the non-canonical purine nucleotides XTP (xanthosine triphosphate), dITP (deoxyinosine triphosphate) and ITP. Seems to function as a house-cleaning enzyme that removes non-canonical purine nucleotides from the nucleotide pool, thus preventing their incorporation into DNA/RNA and avoiding chromosomal lesions. The polypeptide is dITP/XTP pyrophosphatase (Streptococcus pneumoniae serotype 4 (strain ATCC BAA-334 / TIGR4)).